Here is a 330-residue protein sequence, read N- to C-terminus: Flotillin-like protein FloA (330 aa).

2 helical membrane-spanning segments follow: residues 6–26 (LFLLLIIAAGIILLAVFFTFV) and 28–48 (VMLWISALAAGVKISIFTLIG).

This sequence belongs to the flotillin-like FloA family. Homooligomerizes.

The protein resides in the cell membrane. It localises to the membrane raft. Found in functional membrane microdomains (FMM) that may be equivalent to eukaryotic membrane rafts. FMMs are highly dynamic and increase in number as cells age. Flotillins are thought to be important factors in membrane fluidity. The polypeptide is Flotillin-like protein FloA (Bacillus licheniformis (strain ATCC 14580 / DSM 13 / JCM 2505 / CCUG 7422 / NBRC 12200 / NCIMB 9375 / NCTC 10341 / NRRL NRS-1264 / Gibson 46)).